The sequence spans 364 residues: DNA polymerase IV (364 aa).

The region spanning 14–198 is the UmuC domain; the sequence is IIHIDMDAFF…LPIEKFHGVG (185 aa). Positions 18 and 116 each coordinate Mg(2+). The active site involves E117.

The protein belongs to the DNA polymerase type-Y family. In terms of assembly, monomer. The cofactor is Mg(2+).

It localises to the cytoplasm. It carries out the reaction DNA(n) + a 2'-deoxyribonucleoside 5'-triphosphate = DNA(n+1) + diphosphate. Poorly processive, error-prone DNA polymerase involved in untargeted mutagenesis. Copies undamaged DNA at stalled replication forks, which arise in vivo from mismatched or misaligned primer ends. These misaligned primers can be extended by PolIV. Exhibits no 3'-5' exonuclease (proofreading) activity. May be involved in translesional synthesis, in conjunction with the beta clamp from PolIII. In Streptococcus agalactiae serotype Ia (strain ATCC 27591 / A909 / CDC SS700), this protein is DNA polymerase IV.